The sequence spans 291 residues: G1/S-specific cyclin-D1 (291 aa).

Thr282 carries the post-translational modification Phosphothreonine.

Belongs to the cyclin family. Cyclin D subfamily. As to quaternary structure, interacts with the CDK4 and CDK6 protein kinases to form a serine/threonine kinase holoenzyme complex. The cyclin subunit imparts substrate specificity to the complex. In terms of processing, phosphorylation at Thr-282 by MAP kinases is required for ubiquitination and degradation by the DCX(AMBRA1) complex. Ubiquitinated by the DCX(AMBRA1) complex during the transition from G1 to S cell phase, leading to its degradation. The DCX(AMBRA1) complex represents the major regulator of CCND1 stability during the G1/S transition.

The protein resides in the nucleus. It is found in the cytoplasm. Functionally, regulatory component of the cyclin D1-CDK4 (DC) complex that phosphorylates and inhibits members of the retinoblastoma (RB) protein family including RB1 and regulates the cell-cycle during G(1)/S transition. Phosphorylation of RB1 allows dissociation of the transcription factor E2F from the RB/E2F complex and the subsequent transcription of E2F target genes which are responsible for the progression through the G(1) phase. Hypophosphorylates RB1 in early G(1) phase. Cyclin D-CDK4 complexes are major integrators of various mitogenenic and antimitogenic signals. In Danio rerio (Zebrafish), this protein is G1/S-specific cyclin-D1 (ccnd1).